Consider the following 374-residue polypeptide: MSLGEFAQSRSLTLGVELELQIVNTHDYDLAPSAVDLLRLMERHKVPGSVVPEMTDSMIELSTGICTDYDDALSQLREIRDALVSCAAQLNVGLCGGGTHPFQDWSQRRIFNKPRFQELSQLYGYLSKQFTIFGQHVHVGCPGPDQALVLLHGLSRFIPHLIALSASSPFVQGTDTGFDSARLNSVFAFPMSGRAPFVQTWDDFNVYFNKMTRTGVIKSMKDFYWDIRPKPEYGTIEVRVLDTPLTVEKAAAMAGYIQCLARWLRVEKPFELNEDDYLPYTYNRFQACRFGLDGIFVDPQTGEHRTLRDDILASFDKLELHAMELRAEGAINYLRADLLRIGNDASWIRHINDEEHLLAEVVRQQCQRWAGQGR.

It belongs to the glutamate--cysteine ligase type 2 family. YbdK subfamily.

The catalysed reaction is L-cysteine + L-glutamate + ATP = gamma-L-glutamyl-L-cysteine + ADP + phosphate + H(+). ATP-dependent carboxylate-amine ligase which exhibits weak glutamate--cysteine ligase activity. The polypeptide is Putative glutamate--cysteine ligase 2 (Leptothrix cholodnii (strain ATCC 51168 / LMG 8142 / SP-6) (Leptothrix discophora (strain SP-6))).